The primary structure comprises 206 residues: Small ribosomal subunit protein uS4A (206 aa).

The 67-residue stretch at 98 to 164 (LRLDNVAYKL…EKFKTFAENP (67 aa)) folds into the S4 RNA-binding domain.

It belongs to the universal ribosomal protein uS4 family. In terms of assembly, part of the 30S ribosomal subunit. Contacts protein S5. The interaction surface between S4 and S5 is involved in control of translational fidelity.

In terms of biological role, one of the primary rRNA binding proteins, it binds directly to 16S rRNA where it nucleates assembly of the body of the 30S subunit. Functionally, with S5 and S12 plays an important role in translational accuracy. This Clostridium acetobutylicum (strain ATCC 824 / DSM 792 / JCM 1419 / IAM 19013 / LMG 5710 / NBRC 13948 / NRRL B-527 / VKM B-1787 / 2291 / W) protein is Small ribosomal subunit protein uS4A (rspD1).